The sequence spans 781 residues: N-acetylneuraminate (7)9-O-acetyltransferase (781 aa).

The Cytoplasmic segment spans residues 1 to 15; it reads MAVLAYNLGKREINQ. A helical transmembrane segment spans residues 16–36; it reads YFSIKNAKLLAAAAVVLLTVF. At 37–308 the chain is on the lumenal side; that stretch reads HAASRHYGSS…SAPPLSVLQK (272 aa). The active-site Acyl-ester intermediate is serine 94. Residues asparagine 139, asparagine 185, and asparagine 239 are each glycosylated (N-linked (GlcNAc...) asparagine). Residues aspartate 264 and histidine 267 contribute to the active site. A helical membrane pass occupies residues 309-329; sequence LAAAVLLVSVVCFVLLGFSSH. The interval 330 to 350 is disordered; sequence RKSRPAPDVESGEEKKHPAAV. Over 330–354 the chain is Cytoplasmic; that stretch reads RKSRPAPDVESGEEKKHPAAVGQLN. A helical membrane pass occupies residues 355 to 375; the sequence is PKGPLLAIGKMSLIMLYFYLC. Topologically, residues 376–386 are lumenal; sequence DRADIFMKEQK. The helical transmembrane segment at 387–407 threads the bilayer; it reads FYTHSAFFIPLIYIFVLGVFY. Over 408 to 430 the chain is Cytoplasmic; that stretch reads SENSKETKLLNREQTDEWKGWMQ. A helical transmembrane segment spans residues 431 to 451; sequence LVILIYHISGASAFIPVYMHV. A topological domain (lumenal) is located at residue arginine 452. The helical transmembrane segment at 453-473 threads the bilayer; the sequence is VLVAAYLFQTGYGHFSFFWLK. At 474 to 477 the chain is on the cytoplasmic side; the sequence is GDFG. The chain crosses the membrane as a helical span at residues 478-498; that stretch reads LYRVCQVLFRLNFLVVVLCLV. The Lumenal segment spans residues 499 to 504; the sequence is MDRPYQ. Residues 505–525 form a helical membrane-spanning segment; that stretch reads FYYFVPLVTFWFAVIYATMAL. The Cytoplasmic segment spans residues 526-537; that stretch reads WPQILQKQANGS. A helical transmembrane segment spans residues 538-558; it reads AFWNLALLLKLLGLLLFIGFF. The Lumenal portion of the chain corresponds to 559 to 595; sequence AYSQELFEGIFSVWPLSKLFELQGSIHEWWFRWKLDR. The helical transmembrane segment at 596-616 threads the bilayer; it reads FAVVNGMLFAFIYLLLQKYQL. Over 617-629 the chain is Cytoplasmic; the sequence is LSEGKGEPLFSNK. The chain crosses the membrane as a helical span at residues 630–650; the sequence is ISNCLLFVSVVSFMTYSIWAS. Over 651 to 660 the chain is Lumenal; the sequence is GCKNKSECNE. Residue asparagine 654 is glycosylated (N-linked (GlcNAc...) asparagine). Residues 661–681 traverse the membrane as a helical segment; the sequence is MHPYISVILAFILIRNIPGYA. Topologically, residues 682–687 are cytoplasmic; sequence RSLYSS. The helical transmembrane segment at 688 to 708 threads the bilayer; that stretch reads FFAWFGKISLELFICQYHIWL. The Lumenal portion of the chain corresponds to 709–714; that stretch reads AADTKG. A helical transmembrane segment spans residues 715-735; the sequence is ILVLIPGNPTLNIIVSTFIFV. Over 736-756 the chain is Cytoplasmic; that stretch reads CVAHEISQITNDLAQVAIPKE. The helical transmembrane segment at 757 to 777 threads the bilayer; that stretch reads SGPLLKRLLGAGVFLVLVLTL. The Lumenal segment spans residues 778 to 781; sequence SQKD.

Belongs to the PC-esterase family. CASD1 subfamily.

It is found in the golgi apparatus membrane. It catalyses the reaction CMP-N-acetyl-beta-neuraminate + acetyl-CoA = CMP-N-acetyl-9-O-acetyl-beta-neuraminate + CoA. The enzyme catalyses a ganglioside GD3 (d18:1(4E)) + acetyl-CoA = a ganglioside Ac-O-7-GD3(d18:1(4E)) + CoA. The catalysed reaction is CMP-N-acetyl-beta-neuraminate + acetyl-CoA = CMP-N-acetyl-7-O-acetyl-beta-neuraminate + CoA. Functionally, key enzyme in the biosynthesis of O-acetylated (O-Ac) sialoglycans such as gangliosides O-AcGD3 and O-AcGD2, which affect various processes such as cell-cell interactions, host-pathogen recognition. Catalyzes the transfer of an acetyl group from a donor, the acetyl-coenzyme-A molecule (acetyl-CoA), to the C7/8/9 OH-position of a sialic acid residue. The primary site of O-acetyl group transfer on sialic acid seems to depend on cell type and can be C7, from which the O-acetyl group could subsequently migrate to the C8 and then to the C9 position, or at C9 with possibility of migrating to the C8 and then to the C7 position. Together with ST8SIA1 (GD3 synthase) it increases the levels of ganglioside Ac-O-7-GD3. Can transfer the acetyl group from acetyl-CoA to free sialate (N-acetylneuraminate, Neu5Ac) in vitro, but has preferred substrate specificity for CMP-activated sialate (CMP-Neu5Ac), resulting in the formation of 9-O-acetylated CMP-Neu5Ac (CMP-Neu5,9Ac2). CMP-Neu5,9Ac2 may be used by sialyltransferases as a sialate donor for glycoconjugate acceptors such as ganglioside GD3. O-acetylation at position C9 of ganglioside GD3 can counteract the pro-apoptotic effects of the ganglioside GD3 in tumor cells. The protein is N-acetylneuraminate (7)9-O-acetyltransferase of Danio rerio (Zebrafish).